A 410-amino-acid polypeptide reads, in one-letter code: Cell division protein FtsZ (410 aa).

GTP contacts are provided by residues 22 to 26 (GGGGN), 109 to 111 (GTG), glutamate 140, arginine 144, and aspartate 188. The tract at residues 318–410 (ESKKDRKPHR…STPPFFRRKR (93 aa)) is disordered. Polar residues predominate over residues 330–344 (RQAVQPMQQTTQSVE). Residues 360 to 398 (WDIRREQNTRPKVDESSLEQVDKKEFDTFHREEPNHNDD) are compositionally biased toward basic and acidic residues.

Belongs to the FtsZ family. Homodimer. Polymerizes to form a dynamic ring structure in a strictly GTP-dependent manner. Interacts directly with several other division proteins.

Its subcellular location is the cytoplasm. Its function is as follows. Essential cell division protein that forms a contractile ring structure (Z ring) at the future cell division site. The regulation of the ring assembly controls the timing and the location of cell division. One of the functions of the FtsZ ring is to recruit other cell division proteins to the septum to produce a new cell wall between the dividing cells. Binds GTP and shows GTPase activity. The protein is Cell division protein FtsZ of Enterococcus faecalis (strain ATCC 700802 / V583).